Consider the following 980-residue polypeptide: Hypoxia up-regulated protein 1 (980 aa).

Residues methionine 1–serine 24 form the signal peptide. Disordered stretches follow at residues glutamate 558–valine 682 and lysine 894–leucine 980. Basic and acidic residues-rich tracts occupy residues alanine 599–lysine 656 and lysine 896–serine 906. The span at threonine 907 to threonine 916 shows a compositional bias: polar residues. 2 stretches are compositionally biased toward basic and acidic residues: residues aspartate 918 to glutamate 949 and threonine 960 to leucine 980. The Prevents secretion from ER motif lies at glutamate 977–leucine 980.

Belongs to the heat shock protein 70 family.

The protein localises to the endoplasmic reticulum lumen. Functionally, has a pivotal role in cytoprotective cellular mechanisms triggered by oxygen deprivation. May play a role as a molecular chaperone and participate in protein folding. The protein is Hypoxia up-regulated protein 1 (hyou1) of Danio rerio (Zebrafish).